The chain runs to 701 residues: DC-STAMP domain-containing protein 2 (701 aa).

The next 4 helical transmembrane spans lie at 15-35, 40-60, 82-102, and 215-235; these read TCGF…ELLG, PFGC…GMGF, LLLL…NTLQ, and FPHL…LASL. N-linked (GlcNAc...) asparagine glycans are attached at residues Asn-272 and Asn-284. 2 consecutive transmembrane segments (helical) span residues 310 to 330 and 404 to 424; these read ALSL…IQAL and LLIM…LDLA. The N-linked (GlcNAc...) asparagine glycan is linked to Asn-468. A helical transmembrane segment spans residues 488–508; sequence YIVIGTMYGLCFFVTLFGSYV. Positions 673 to 701 are disordered; it reads LQEALGTNLSDKSTSKPERAGNRNQDRKQ. Positions 685–701 are enriched in basic and acidic residues; the sequence is STSKPERAGNRNQDRKQ.

As to quaternary structure, interacts with DCST1. Expressed in testis.

The protein localises to the cytoplasmic vesicle. Its subcellular location is the secretory vesicle. It is found in the acrosome membrane. Its function is as follows. Essential sperm cell-surface protein required for sperm-egg fusion and fertilization. In Mus musculus (Mouse), this protein is DC-STAMP domain-containing protein 2.